Here is a 105-residue protein sequence, read N- to C-terminus: uncharacterized protein (105 aa).

Belongs to the EspC family.

May be involved in assembly of the ESX-1 / type VII specialized secretion system (T7SS), which exports several proteins including EsxA and EsxB. Involved in DNA conjugation, in at least recipient strain. This is an uncharacterized protein from Mycolicibacterium smegmatis (strain MKD8) (Mycobacterium smegmatis).